The following is a 335-amino-acid chain: MIEFQNVHKTYRVDGRDIPALNPTSLTIEDGQVFGLIGHSGAGKSTMLRLINRLEAPSGGKIIVDGEDVTAFDANQLRRFRQQVGMIFQHFNLLASKTVADNVALPLVLAGELSRGEIDKRVTELLARVGLQDHARKYPAQLSGGQKQRVGIARALSTNPKILLCDEATSALDPQTTASVLQLLAEINRELKLTIVLITHEMDVIRRVCDRVAVMDAGKIVEQGPVAEVFLHPEHPTTKRFVQEDEQVDEGEQRDDFAHVPGRIVRLTFQGDATYAPLLGTVARETGVDYSILAGRIDRIKDVPYGQLTLALIGGDMEAAFARFKAADVHMEVLR.

The ABC transporter domain occupies 2–242 (IEFQNVHKTY…PEHPTTKRFV (241 aa)). 38-45 (GHSGAGKS) is an ATP binding site.

It belongs to the ABC transporter superfamily. Methionine importer (TC 3.A.1.24) family. The complex is composed of two ATP-binding proteins (MetN), two transmembrane proteins (MetI) and a solute-binding protein (MetQ).

It is found in the cell inner membrane. The enzyme catalyses L-methionine(out) + ATP + H2O = L-methionine(in) + ADP + phosphate + H(+). It catalyses the reaction D-methionine(out) + ATP + H2O = D-methionine(in) + ADP + phosphate + H(+). In terms of biological role, part of the ABC transporter complex MetNIQ involved in methionine import. Responsible for energy coupling to the transport system. The protein is Methionine import ATP-binding protein MetN 2 of Pseudomonas entomophila (strain L48).